A 732-amino-acid chain; its full sequence is Catalase-peroxidase (732 aa).

Positions 1 to 10 (MDAKTDDKAG) are enriched in basic and acidic residues. The disordered stretch occupies residues 1-26 (MDAKTDDKAGKCPVAHGPAPRGNRDW). The tryptophyl-tyrosyl-methioninium (Trp-Tyr) (with M-243) cross-link spans 95–217 (WHSAGTYRTT…LGAVQMGLIY (123 aa)). His96 acts as the Proton acceptor in catalysis. Positions 217–243 (YVNPEGPNGNPDPLGSAKDIRETFARM) form a cross-link, tryptophyl-tyrosyl-methioninium (Tyr-Met) (with W-95). His258 contributes to the heme b binding site.

It belongs to the peroxidase family. Peroxidase/catalase subfamily. Homodimer or homotetramer. It depends on heme b as a cofactor. Post-translationally, formation of the three residue Trp-Tyr-Met cross-link is important for the catalase, but not the peroxidase activity of the enzyme.

The catalysed reaction is H2O2 + AH2 = A + 2 H2O. It carries out the reaction 2 H2O2 = O2 + 2 H2O. Bifunctional enzyme with both catalase and broad-spectrum peroxidase activity. This chain is Catalase-peroxidase, found in Rhodopseudomonas palustris (strain BisB18).